Reading from the N-terminus, the 306-residue chain is Ribonuclease Z (306 aa).

H63, H65, D67, H68, H141, D208, and H266 together coordinate Zn(2+). The active-site Proton acceptor is D67.

It belongs to the RNase Z family. Homodimer. The cofactor is Zn(2+).

The enzyme catalyses Endonucleolytic cleavage of RNA, removing extra 3' nucleotides from tRNA precursor, generating 3' termini of tRNAs. A 3'-hydroxy group is left at the tRNA terminus and a 5'-phosphoryl group is left at the trailer molecule.. Its function is as follows. Zinc phosphodiesterase, which displays some tRNA 3'-processing endonuclease activity. Probably involved in tRNA maturation, by removing a 3'-trailer from precursor tRNA. The polypeptide is Ribonuclease Z (Chlamydia abortus (strain DSM 27085 / S26/3) (Chlamydophila abortus)).